A 132-amino-acid polypeptide reads, in one-letter code: Large ribosomal subunit protein bL21 (132 aa).

Residues 111-132 (AAEKPARKPRAKKTNEVTTDGA) are disordered.

Belongs to the bacterial ribosomal protein bL21 family. Part of the 50S ribosomal subunit. Contacts protein L20.

Functionally, this protein binds to 23S rRNA in the presence of protein L20. The protein is Large ribosomal subunit protein bL21 of Dehalococcoides mccartyi (strain CBDB1).